A 414-amino-acid polypeptide reads, in one-letter code: DNA primase small subunit PriS (414 aa).

Active-site residues include aspartate 98, aspartate 100, and aspartate 312.

It belongs to the eukaryotic-type primase small subunit family. In terms of assembly, heterodimer of a small subunit (PriS) and a large subunit (PriL). Mg(2+) serves as cofactor. The cofactor is Mn(2+).

Its function is as follows. Catalytic subunit of DNA primase, an RNA polymerase that catalyzes the synthesis of short RNA molecules used as primers for DNA polymerase during DNA replication. The small subunit contains the primase catalytic core and has DNA synthesis activity on its own. Binding to the large subunit stabilizes and modulates the activity, increasing the rate of DNA synthesis while decreasing the length of the DNA fragments, and conferring RNA synthesis capability. The DNA polymerase activity may enable DNA primase to also catalyze primer extension after primer synthesis. May also play a role in DNA repair. This Methanosarcina mazei (strain ATCC BAA-159 / DSM 3647 / Goe1 / Go1 / JCM 11833 / OCM 88) (Methanosarcina frisia) protein is DNA primase small subunit PriS.